The following is a 141-amino-acid chain: Large ribosomal subunit protein uL16 (141 aa).

Belongs to the universal ribosomal protein uL16 family. As to quaternary structure, part of the 50S ribosomal subunit.

Binds 23S rRNA and is also seen to make contacts with the A and possibly P site tRNAs. This is Large ribosomal subunit protein uL16 from Deinococcus geothermalis (strain DSM 11300 / CIP 105573 / AG-3a).